Here is an 82-residue protein sequence, read N- to C-terminus: Acyl carrier protein (82 aa).

The Carrier domain maps to 3-78; the sequence is QEIFERVKKV…KAVEHISEKV (76 aa). O-(pantetheine 4'-phosphoryl)serine is present on Ser-38.

The protein belongs to the acyl carrier protein (ACP) family. Post-translationally, 4'-phosphopantetheine is transferred from CoA to a specific serine of apo-ACP by AcpS. This modification is essential for activity because fatty acids are bound in thioester linkage to the sulfhydryl of the prosthetic group.

It localises to the cytoplasm. It functions in the pathway lipid metabolism; fatty acid biosynthesis. Carrier of the growing fatty acid chain in fatty acid biosynthesis. The sequence is that of Acyl carrier protein from Gloeothece citriformis (strain PCC 7424) (Cyanothece sp. (strain PCC 7424)).